The sequence spans 194 residues: Leucyl/phenylalanyl-tRNA--protein transferase (194 aa).

It belongs to the L/F-transferase family.

It is found in the cytoplasm. The catalysed reaction is N-terminal L-lysyl-[protein] + L-leucyl-tRNA(Leu) = N-terminal L-leucyl-L-lysyl-[protein] + tRNA(Leu) + H(+). The enzyme catalyses N-terminal L-arginyl-[protein] + L-leucyl-tRNA(Leu) = N-terminal L-leucyl-L-arginyl-[protein] + tRNA(Leu) + H(+). It carries out the reaction L-phenylalanyl-tRNA(Phe) + an N-terminal L-alpha-aminoacyl-[protein] = an N-terminal L-phenylalanyl-L-alpha-aminoacyl-[protein] + tRNA(Phe). In terms of biological role, functions in the N-end rule pathway of protein degradation where it conjugates Leu, Phe and, less efficiently, Met from aminoacyl-tRNAs to the N-termini of proteins containing an N-terminal arginine or lysine. This chain is Leucyl/phenylalanyl-tRNA--protein transferase, found in Chlorobaculum tepidum (strain ATCC 49652 / DSM 12025 / NBRC 103806 / TLS) (Chlorobium tepidum).